We begin with the raw amino-acid sequence, 187 residues long: Endoribonuclease YbeY (187 aa).

Zn(2+)-binding residues include histidine 151, histidine 155, and histidine 161.

The protein belongs to the endoribonuclease YbeY family. Zn(2+) is required as a cofactor.

The protein resides in the cytoplasm. Functionally, single strand-specific metallo-endoribonuclease involved in late-stage 70S ribosome quality control and in maturation of the 3' terminus of the 16S rRNA. The polypeptide is Endoribonuclease YbeY (Prochlorococcus marinus (strain MIT 9313)).